We begin with the raw amino-acid sequence, 246 residues long: UDP-N-acetyl-D-mannosaminuronic acid transferase (246 aa).

This sequence belongs to the glycosyltransferase 26 family.

It catalyses the reaction UDP-N-acetyl-alpha-D-mannosaminouronate + N-acetyl-alpha-D-glucosaminyl-di-trans,octa-cis-undecaprenyl diphosphate = beta-D-ManNAcA-(1-&gt;4)-alpha-D-GlcNAc-di-trans,octa-cis-undecaprenyl diphosphate + UDP + H(+). It functions in the pathway bacterial outer membrane biogenesis; enterobacterial common antigen biosynthesis. Its function is as follows. Catalyzes the synthesis of Und-PP-GlcNAc-ManNAcA (Lipid II), the second lipid-linked intermediate involved in enterobacterial common antigen (ECA) synthesis. The sequence is that of UDP-N-acetyl-D-mannosaminuronic acid transferase from Escherichia coli (strain 55989 / EAEC).